We begin with the raw amino-acid sequence, 113 residues long: MHELGITQNIVAIVNEYAHGAKVRRVLLEIGKLSAIMPDAIKFCFDICSQGTVLEGAVLEILEIPGLAKCRQCGAEIALEKPFGICNCGSVHLDLITGEELKIKEIEVEEVCV.

Residue His-2 participates in Ni(2+) binding. Positions 70, 73, 86, and 88 each coordinate Zn(2+).

The protein belongs to the HypA/HybF family.

Involved in the maturation of [NiFe] hydrogenases. Required for nickel insertion into the metal center of the hydrogenase. This Trichormus variabilis (strain ATCC 29413 / PCC 7937) (Anabaena variabilis) protein is Hydrogenase maturation factor HypA.